The following is a 270-amino-acid chain: 4-hydroxy-tetrahydrodipicolinate reductase (270 aa).

7 to 12 (GVSGRM) lines the NAD(+) pocket. Position 34 (arginine 34) interacts with NADP(+). Residues 97–99 (GTT) and 121–124 (SGNM) contribute to the NAD(+) site. The Proton donor/acceptor role is filled by histidine 155. Position 156 (histidine 156) interacts with (S)-2,3,4,5-tetrahydrodipicolinate. Residue lysine 159 is the Proton donor of the active site. Residue 165–166 (GT) participates in (S)-2,3,4,5-tetrahydrodipicolinate binding.

This sequence belongs to the DapB family.

The protein localises to the cytoplasm. The catalysed reaction is (S)-2,3,4,5-tetrahydrodipicolinate + NAD(+) + H2O = (2S,4S)-4-hydroxy-2,3,4,5-tetrahydrodipicolinate + NADH + H(+). It catalyses the reaction (S)-2,3,4,5-tetrahydrodipicolinate + NADP(+) + H2O = (2S,4S)-4-hydroxy-2,3,4,5-tetrahydrodipicolinate + NADPH + H(+). It participates in amino-acid biosynthesis; L-lysine biosynthesis via DAP pathway; (S)-tetrahydrodipicolinate from L-aspartate: step 4/4. Functionally, catalyzes the conversion of 4-hydroxy-tetrahydrodipicolinate (HTPA) to tetrahydrodipicolinate. In Allorhizobium ampelinum (strain ATCC BAA-846 / DSM 112012 / S4) (Agrobacterium vitis (strain S4)), this protein is 4-hydroxy-tetrahydrodipicolinate reductase.